A 430-amino-acid chain; its full sequence is Ribosomal protein uS12 methylthiotransferase RimO (430 aa).

Residues 2–119 enclose the MTTase N-terminal domain; the sequence is ISVYSISLGC…WPAMLAHALK (118 aa). [4Fe-4S] cluster is bound by residues cysteine 11, cysteine 46, cysteine 81, cysteine 145, cysteine 149, and cysteine 152. One can recognise a Radical SAM core domain in the interval 131–361; the sequence is STGPSYAWLK…MEVQAEISEE (231 aa). In terms of domain architecture, TRAM spans 364-430; the sequence is AVHEGTRQQV…TRTYDLVALV (67 aa).

It belongs to the methylthiotransferase family. RimO subfamily. The cofactor is [4Fe-4S] cluster.

It is found in the cytoplasm. The catalysed reaction is L-aspartate(89)-[ribosomal protein uS12]-hydrogen + (sulfur carrier)-SH + AH2 + 2 S-adenosyl-L-methionine = 3-methylsulfanyl-L-aspartate(89)-[ribosomal protein uS12]-hydrogen + (sulfur carrier)-H + 5'-deoxyadenosine + L-methionine + A + S-adenosyl-L-homocysteine + 2 H(+). Functionally, catalyzes the methylthiolation of an aspartic acid residue of ribosomal protein uS12. In Nitratidesulfovibrio vulgaris (strain DP4) (Desulfovibrio vulgaris), this protein is Ribosomal protein uS12 methylthiotransferase RimO.